Reading from the N-terminus, the 361-residue chain is Probable cinnamyl alcohol dehydrogenase (361 aa).

Residue Cys-48 participates in Zn(2+) binding. Thr-50 provides a ligand contact to NADP(+). 7 residues coordinate Zn(2+): His-70, Glu-71, Cys-101, Cys-104, Cys-107, Cys-115, and Cys-164. Residues Thr-168, 189 to 194 (GLGGVG), 212 to 217 (SSSDKK), Thr-252, Gly-276, and 299 to 301 (SFI) contribute to the NADP(+) site.

The protein belongs to the zinc-containing alcohol dehydrogenase family. In terms of assembly, homodimer. The cofactor is Zn(2+).

It carries out the reaction (E)-cinnamyl alcohol + NADP(+) = (E)-cinnamaldehyde + NADPH + H(+). The enzyme catalyses (E)-coniferol + NADP(+) = (E)-coniferaldehyde + NADPH + H(+). It catalyses the reaction (E)-sinapyl alcohol + NADP(+) = (E)-sinapaldehyde + NADPH + H(+). The catalysed reaction is (E)-4-coumaroyl alcohol + NADP(+) = (E)-4-coumaraldehyde + NADPH + H(+). It carries out the reaction (E)-caffeyl alcohol + NADP(+) = (E)-caffeyl aldehyde + NADPH + H(+). It participates in aromatic compound metabolism; phenylpropanoid biosynthesis. Its function is as follows. Involved in lignin biosynthesis. Catalyzes the final step specific for the production of lignin monomers. Catalyzes the NADPH-dependent reduction of coniferaldehyde, 5-hydroxyconiferaldehyde, sinapaldehyde, 4-coumaraldehyde and caffeyl aldehyde to their respective alcohols. This chain is Probable cinnamyl alcohol dehydrogenase, found in Lolium perenne (Perennial ryegrass).